We begin with the raw amino-acid sequence, 324 residues long: tRNA pseudouridine synthase B (324 aa).

Asp49 (nucleophile) is an active-site residue. The interval 87 to 107 (RSTDDLEGQPTKTSDKRPSRE) is disordered.

This sequence belongs to the pseudouridine synthase TruB family. Type 1 subfamily.

It carries out the reaction uridine(55) in tRNA = pseudouridine(55) in tRNA. Responsible for synthesis of pseudouridine from uracil-55 in the psi GC loop of transfer RNAs. This is tRNA pseudouridine synthase B from Brucella canis (strain ATCC 23365 / NCTC 10854 / RM-666).